Consider the following 427-residue polypeptide: Mitogen-activated protein kinase 8 (427 aa).

In terms of domain architecture, Protein kinase spans 26-321 (YQNLKPIGSG…VDEALQHPYI (296 aa)). ATP contacts are provided by residues 32–40 (IGSGAQGIV) and Lys55. The residue at position 116 (Cys116) is an S-nitrosocysteine. Catalysis depends on Asp151, which acts as the Proton acceptor. Thr183 carries the phosphothreonine; by MAP2K7 modification. The short motif at 183-185 (TPY) is the TXY element. Phosphotyrosine; by MAP2K4 is present on Tyr185. Met301 and Ser377 each carry phosphoserine. A disordered region spans residues 371-427 (VIRGQPSPLGAAVINGSQHPSSSSSVNDVSSMSTDPTLASDTDSSLEAAAGPLGCCR). The segment covering 387 to 403 (SQHPSSSSSVNDVSSMS) has biased composition (low complexity). The segment covering 404–415 (TDPTLASDTDSS) has biased composition (polar residues).

Belongs to the protein kinase superfamily. CMGC Ser/Thr protein kinase family. MAP kinase subfamily. As to quaternary structure, forms a complex with MAPK8IP1 and ARHGEF28. Found in a complex with SH3RF1, RAC1, MAP3K11/MLK3, MAP2K7/MKK7 and MAPK8IP1/JIP1. Found in a complex with SH3RF1, RAC2, MAP3K7/TAK1, MAP2K7/MKK7, MAPK8IP1/JIP1 and MAPK9/JNK2. Binds to at least four scaffolding proteins, MAPK8IP1/JIP-1, MAPK8IP2/JIP-2, MAPK8IP3/JIP-3/JSAP1 and SPAG9/MAPK8IP4/JIP-4. These proteins also bind other components of the JNK signaling pathway. Interacts with TP53 and WWOX. Interacts with JAMP. Interacts with HSF1 (via D domain and preferentially with hyperphosphorylated form); this interaction occurs under both normal growth conditions and immediately upon heat shock. Interacts (phosphorylated form) with NFE2; the interaction phosphorylates NFE2 in undifferentiated cells. Interacts with NFATC4. Interacts with MECOM; regulates JNK signaling. Interacts with PIN1; this interaction mediates MAPK8 conformational changes leading to the binding of MAPK8 to its substrates. Interacts with GRIPAP1. Interacts with POU5F1; phosphorylates POU5F1 at 'Ser-355'. Interacts with STMN2, STMN3 and STMN4. Interacts with HSF4. Mg(2+) serves as cofactor. Post-translationally, dually phosphorylated on Thr-183 and Tyr-185 by MAP2K7 and MAP2K4, which activates the enzyme. Phosphorylated by TAOK2. May be phosphorylated at Thr-183 and Tyr-185 by MAP3K1/MEKK1. Phosphorylated form is more concentrated at synapses than none-phosphorylated.

Its subcellular location is the cytoplasm. The protein resides in the nucleus. It is found in the synapse. The enzyme catalyses L-seryl-[protein] + ATP = O-phospho-L-seryl-[protein] + ADP + H(+). The catalysed reaction is L-threonyl-[protein] + ATP = O-phospho-L-threonyl-[protein] + ADP + H(+). Activated by threonine and tyrosine phosphorylation by either of two dual specificity kinases, MAP2K4 and MAP2K7. MAP2K4 shows a strong preference for Tyr-185 while MAP2K7 phosphorylates Tyr-183 preferentially. Inhibited by dual specificity phosphatases, such as DUSP1. Inhibited by SERPINB3. Its function is as follows. Serine/threonine-protein kinase involved in various processes such as cell proliferation, differentiation, migration, transformation and programmed cell death. Extracellular stimuli such as pro-inflammatory cytokines or physical stress stimulate the stress-activated protein kinase/c-Jun N-terminal kinase (SAP/JNK) signaling pathway. In this cascade, two dual specificity kinases MAP2K4/MKK4 and MAP2K7/MKK7 phosphorylate and activate MAPK8/JNK1. In turn, MAPK8/JNK1 phosphorylates a number of transcription factors, primarily components of AP-1 such as JUN, JDP2 and ATF2 and thus regulates AP-1 transcriptional activity. Phosphorylates the replication licensing factor CDT1, inhibiting the interaction between CDT1 and the histone H4 acetylase HBO1 to replication origins. Loss of this interaction abrogates the acetylation required for replication initiation. Promotes stressed cell apoptosis by phosphorylating key regulatory factors including p53/TP53 and Yes-associates protein YAP1. In T-cells, MAPK8 and MAPK9 are required for polarized differentiation of T-helper cells into Th1 cells. Contributes to the survival of erythroid cells by phosphorylating the antagonist of cell death BAD upon EPO stimulation. Mediates starvation-induced BCL2 phosphorylation, BCL2 dissociation from BECN1, and thus activation of autophagy. Phosphorylates STMN2 and hence regulates microtubule dynamics, controlling neurite elongation in cortical neurons. In the developing brain, through its cytoplasmic activity on STMN2, negatively regulates the rate of exit from multipolar stage and of radial migration from the ventricular zone. Phosphorylates several other substrates including heat shock factor protein 4 (HSF4), the deacetylase SIRT1, ELK1, or the E3 ligase ITCH. Phosphorylates the CLOCK-BMAL1 heterodimer and plays a role in the regulation of the circadian clock. Phosphorylates the heat shock transcription factor HSF1, suppressing HSF1-induced transcriptional activity. Phosphorylates POU5F1, which results in the inhibition of POU5F1's transcriptional activity and enhances its proteasomal degradation. Phosphorylates JUND and this phosphorylation is inhibited in the presence of MEN1. In neurons, phosphorylates SYT4 which captures neuronal dense core vesicles at synapses. Phosphorylates EIF4ENIF1/4-ET in response to oxidative stress, promoting P-body assembly. Phosphorylates SIRT6 in response to oxidative stress, stimulating its mono-ADP-ribosyltransferase activity. Phosphorylates NLRP3, promoting assembly of the NLRP3 inflammasome. Phosphorylates ALKBH5 in response to reactive oxygen species (ROS), promoting ALKBH5 sumoylation and inactivation. Functionally, JNK1 isoforms display different binding patterns: beta-1 preferentially binds to c-Jun, whereas alpha-1, alpha-2, and beta-2 have a similar low level of binding to both c-Jun or ATF2. However, there is no correlation between binding and phosphorylation, which is achieved at about the same efficiency by all isoforms. In Homo sapiens (Human), this protein is Mitogen-activated protein kinase 8 (MAPK8).